Consider the following 545-residue polypeptide: Ribulokinase (545 aa).

It belongs to the ribulokinase family.

It catalyses the reaction D-ribulose + ATP = D-ribulose 5-phosphate + ADP + H(+). The enzyme catalyses L-ribulose + ATP = L-ribulose 5-phosphate + ADP + H(+). The protein operates within carbohydrate degradation; L-arabinose degradation via L-ribulose; D-xylulose 5-phosphate from L-arabinose (bacterial route): step 2/3. This chain is Ribulokinase, found in Staphylococcus aureus (strain Mu3 / ATCC 700698).